The primary structure comprises 277 residues: Tryptophan synthase alpha chain (277 aa).

Active-site proton acceptor residues include glutamate 42 and glutamate 53.

It belongs to the TrpA family. In terms of assembly, tetramer of two alpha and two beta chains.

It carries out the reaction (1S,2R)-1-C-(indol-3-yl)glycerol 3-phosphate + L-serine = D-glyceraldehyde 3-phosphate + L-tryptophan + H2O. It participates in amino-acid biosynthesis; L-tryptophan biosynthesis; L-tryptophan from chorismate: step 5/5. In terms of biological role, the alpha subunit is responsible for the aldol cleavage of indoleglycerol phosphate to indole and glyceraldehyde 3-phosphate. This Natronomonas pharaonis (strain ATCC 35678 / DSM 2160 / CIP 103997 / JCM 8858 / NBRC 14720 / NCIMB 2260 / Gabara) (Halobacterium pharaonis) protein is Tryptophan synthase alpha chain.